We begin with the raw amino-acid sequence, 568 residues long: 2-succinyl-5-enolpyruvyl-6-hydroxy-3-cyclohexene-1-carboxylate synthase (568 aa).

It belongs to the TPP enzyme family. MenD subfamily. In terms of assembly, homodimer. The cofactor is Mg(2+). It depends on Mn(2+) as a cofactor. Thiamine diphosphate serves as cofactor.

The catalysed reaction is isochorismate + 2-oxoglutarate + H(+) = 5-enolpyruvoyl-6-hydroxy-2-succinyl-cyclohex-3-ene-1-carboxylate + CO2. It functions in the pathway quinol/quinone metabolism; 1,4-dihydroxy-2-naphthoate biosynthesis; 1,4-dihydroxy-2-naphthoate from chorismate: step 2/7. It participates in quinol/quinone metabolism; menaquinone biosynthesis. Functionally, catalyzes the thiamine diphosphate-dependent decarboxylation of 2-oxoglutarate and the subsequent addition of the resulting succinic semialdehyde-thiamine pyrophosphate anion to isochorismate to yield 2-succinyl-5-enolpyruvyl-6-hydroxy-3-cyclohexene-1-carboxylate (SEPHCHC). The protein is 2-succinyl-5-enolpyruvyl-6-hydroxy-3-cyclohexene-1-carboxylate synthase of Histophilus somni (strain 2336) (Haemophilus somnus).